The sequence spans 260 residues: GDSL esterase/lipase WDL1 (260 aa).

The first 35 residues, M1–A35, serve as a signal peptide directing secretion. S18 acts as the Nucleophile in catalysis. N-linked (GlcNAc...) asparagine glycans are attached at residues N83 and N150. Residues D191 and H194 contribute to the active site.

This sequence belongs to the 'GDSL' lipolytic enzyme family. In terms of tissue distribution, highly expressed in panicles. Expressed in shoots, mature flowers and seeds.

The protein localises to the endoplasmic reticulum. In terms of biological role, involved in the organization of leaf cuticle and wax crystals. This Oryza sativa subsp. japonica (Rice) protein is GDSL esterase/lipase WDL1.